The primary structure comprises 424 residues: UPF0415 protein C7orf25 homolog (424 aa).

The protein belongs to the UPF0415 family.

The sequence is that of UPF0415 protein C7orf25 homolog from Xenopus laevis (African clawed frog).